The sequence spans 1015 residues: DExH-box ATP-dependent RNA helicase DExH8 (1015 aa).

In terms of domain architecture, Helicase ATP-binding spans 36–197 (IDKILENRVT…FKELGRGERV (162 aa)). 49–56 (GEPGCGKS) is an ATP binding site. A DEVH box motif is present at residues 144-147 (DEVH). Positions 254-419 (LIHDLILYIH…KLSLRQQVLH (166 aa)) constitute a Helicase C-terminal domain. C3H1-type zinc fingers lie at residues 727 to 753 (YGEA…THTL) and 754 to 782 (QSTR…HAMR).

This sequence belongs to the DExH box helicase family.

It carries out the reaction ATP + H2O = ADP + phosphate + H(+). In Arabidopsis thaliana (Mouse-ear cress), this protein is DExH-box ATP-dependent RNA helicase DExH8.